Here is a 416-residue protein sequence, read N- to C-terminus: L-threonine dehydratase biosynthetic IlvA (416 aa).

At Lys-51 the chain carries N6-(pyridoxal phosphate)lysine. Pyridoxal 5'-phosphate is bound by residues Asn-78, 184–188, and Ser-309; that span reads GGGGL. Positions 333–407 constitute an ACT-like domain; the sequence is HYFVINFPQR…FDNRYVNLHG (75 aa).

It belongs to the serine/threonine dehydratase family. As to quaternary structure, homotetramer. The cofactor is pyridoxal 5'-phosphate.

The enzyme catalyses L-threonine = 2-oxobutanoate + NH4(+). Its pathway is amino-acid biosynthesis; L-isoleucine biosynthesis; 2-oxobutanoate from L-threonine: step 1/1. Functionally, catalyzes the anaerobic formation of alpha-ketobutyrate and ammonia from threonine in a two-step reaction. The first step involved a dehydration of threonine and a production of enamine intermediates (aminocrotonate), which tautomerizes to its imine form (iminobutyrate). Both intermediates are unstable and short-lived. The second step is the nonenzymatic hydrolysis of the enamine/imine intermediates to form 2-ketobutyrate and free ammonia. In the low water environment of the cell, the second step is accelerated by RidA. In Lactococcus lactis subsp. lactis (strain IL1403) (Streptococcus lactis), this protein is L-threonine dehydratase biosynthetic IlvA (ilvA).